Here is a 462-residue protein sequence, read N- to C-terminus: Kremen protein 2 (462 aa).

The N-terminal stretch at 1–25 is a signal peptide; that stretch reads MGTQALQGFLFLLFLPLLQPRGASA. Residues 26-364 are Extracellular-facing; that stretch reads GSLHSPGLSE…SPRPGAPPAA (339 aa). Residues 35–119 form the Kringle domain; the sequence is ECFQVNGADY…YWRYCDIPSC (85 aa). 3 cysteine pairs are disulfide-bonded: Cys36–Cys119, Cys60–Cys100, and Cys89–Cys114. Asn49 carries an N-linked (GlcNAc...) asparagine glycan. The region spanning 121–215 is the WSC domain; it reads MPGYLGCFVD…DGRLGVYEVS (95 aa). A disulfide bond links Cys219 and Cys245. One can recognise a CUB domain in the interval 219–326; that stretch reads CQGNWTAPQG…QGFALTYRGL (108 aa). Asn222, Asn244, and Asn351 each carry an N-linked (GlcNAc...) asparagine glycan. The interval 328 to 352 is disordered; that stretch reads DAAEDPEAPEGSAQTPAAPLDGANV. Residues 365-387 traverse the membrane as a helical segment; the sequence is IGARVFSTVTAVSVLLLLLLGLL. Residues 388–462 lie on the Cytoplasmic side of the membrane; sequence RPLRRRSCLL…SSLRSLISAL (75 aa).

As to quaternary structure, interacts with ERLEC1. Forms a ternary complex with DKK1 and LRP6.

It localises to the membrane. Its function is as follows. Receptor for Dickkopf proteins. Cooperates with DKK1/2 to inhibit Wnt/beta-catenin signaling by promoting the endocytosis of Wnt receptors LRP5 and LRP6. Plays a role in limb development; attenuates Wnt signaling in the developing limb to allow normal limb patterning and can also negatively regulate bone formation. The sequence is that of Kremen protein 2 (KREMEN2) from Homo sapiens (Human).